We begin with the raw amino-acid sequence, 320 residues long: Cytochrome f (320 aa).

The N-terminal stretch at 1 to 35 (MQTRNTFSWIREEITRSISVSLMIYIITWASISSA) is a signal peptide. Tyrosine 36, cysteine 56, cysteine 59, and histidine 60 together coordinate heme. The helical transmembrane segment at 286-305 (VQGLLFFLGSVVLAQIFLVL) threads the bilayer.

The protein belongs to the cytochrome f family. As to quaternary structure, the 4 large subunits of the cytochrome b6-f complex are cytochrome b6, subunit IV (17 kDa polypeptide, petD), cytochrome f and the Rieske protein, while the 4 small subunits are PetG, PetL, PetM and PetN. The complex functions as a dimer. Requires heme as cofactor. In terms of processing, purified from leaves as a water-soluble monomeric protein with a mass of 28.16 kDa, cleavage occurs after Gln-287 and separates the heme-binding from the membrane.

The protein localises to the plastid. Its subcellular location is the chloroplast thylakoid membrane. Functionally, component of the cytochrome b6-f complex, which mediates electron transfer between photosystem II (PSII) and photosystem I (PSI), cyclic electron flow around PSI, and state transitions. The polypeptide is Cytochrome f (petA) (Brassica rapa subsp. rapa (Turnip)).